A 319-amino-acid polypeptide reads, in one-letter code: DNA-directed RNA polymerases IV and V subunit 3B (319 aa).

Methionine 1 bears the N-acetylmethionine mark.

Belongs to the archaeal Rpo3/eukaryotic RPB3 RNA polymerase subunit family. In terms of assembly, component of the RNA polymerase IV and V complexes. Interacts with NRPB11, SHH1, GRP23 and NRPD1.

It is found in the nucleus. DNA-dependent RNA polymerase catalyzes the transcription of DNA into RNA using the four ribonucleoside triphosphates as substrates. Component of RNA polymerases IV and V which mediate short-interfering RNAs (siRNA) accumulation and subsequent RNA-directed DNA methylation-dependent (RdDM) transcriptional gene silencing (TGS) of endogenous repeated sequences, including transposable elements. The polypeptide is DNA-directed RNA polymerases IV and V subunit 3B (NRPD3B) (Arabidopsis thaliana (Mouse-ear cress)).